Here is a 78-residue protein sequence, read N- to C-terminus: uncharacterized protein (78 aa).

This is an uncharacterized protein from Archaeoglobus fulgidus (strain ATCC 49558 / DSM 4304 / JCM 9628 / NBRC 100126 / VC-16).